The sequence spans 359 residues: Centromere-binding protein 1 (359 aa).

Residues 1–262 (MSGKRSYQDD…SHKEVERRRR (262 aa)) are disordered. A compositionally biased stretch (basic and acidic residues) spans 55 to 78 (KENKENRDGDKVGDDEHDVVKGES). The segment covering 120 to 161 (GDEDEDEDEEEEEDEDDHVDIDDVDKDPDAVIDEDDDEEDED) has biased composition (acidic residues). Residues 249 to 259 (QRKESHKEVER) show a composition bias toward basic and acidic residues. The bHLH domain occupies 249 to 297 (QRKESHKEVERRRRQNINTAIEKLSDLLPVKETSKAAILSRAAEYIQKM).

As to quaternary structure, binds DNA as a dimer.

The protein localises to the nucleus. The protein resides in the chromosome. It is found in the centromere. Its function is as follows. Required for chromosome stability and methionine prototrophy. It is involved in chromosomal segregation. Binds to a highly conserved DNA sequence (5'-RTCACRTG-3'), called CDEI, found in centromeres and in several promoters. The polypeptide is Centromere-binding protein 1 (CBF1) (Kluyveromyces lactis (strain ATCC 8585 / CBS 2359 / DSM 70799 / NBRC 1267 / NRRL Y-1140 / WM37) (Yeast)).